The following is a 588-amino-acid chain: L-fucose isomerase (588 aa).

Catalysis depends on proton acceptor residues Glu335 and Asp359. Residues Glu335, Asp359, and His525 each contribute to the Mn(2+) site.

Belongs to the L-fucose isomerase family. It depends on Mn(2+) as a cofactor.

The protein localises to the cytoplasm. It carries out the reaction L-fucose = L-fuculose. It functions in the pathway carbohydrate degradation; L-fucose degradation; L-lactaldehyde and glycerone phosphate from L-fucose: step 1/3. Converts the aldose L-fucose into the corresponding ketose L-fuculose. This is L-fucose isomerase from Streptococcus pneumoniae serotype 4 (strain ATCC BAA-334 / TIGR4).